A 442-amino-acid polypeptide reads, in one-letter code: D-serine dehydratase (442 aa).

Position 118 is an N6-(pyridoxal phosphate)lysine (K118).

Belongs to the serine/threonine dehydratase family. DsdA subfamily. In terms of assembly, monomer. Pyridoxal 5'-phosphate serves as cofactor.

The enzyme catalyses D-serine = pyruvate + NH4(+). The chain is D-serine dehydratase from Shigella sonnei (strain Ss046).